Consider the following 99-residue polypeptide: Nucleoid-associated protein EbfC (99 aa).

This sequence belongs to the YbaB/EbfC family. As to quaternary structure, homodimer.

Its subcellular location is the cytoplasm. The protein resides in the nucleoid. Its function is as follows. Binds to DNA and alters its conformation. May be involved in regulation of gene expression, nucleoid organization and DNA protection. The polypeptide is Nucleoid-associated protein EbfC (Borreliella afzelii (strain PKo) (Borrelia afzelii)).